We begin with the raw amino-acid sequence, 116 residues long: Aspartate 1-decarboxylase (116 aa).

Ser25 serves as the catalytic Schiff-base intermediate with substrate; via pyruvic acid. At Ser25 the chain carries Pyruvic acid (Ser). Thr57 is a substrate binding site. Tyr58 functions as the Proton donor in the catalytic mechanism. Residue 72–74 (GAA) participates in substrate binding.

This sequence belongs to the PanD family. In terms of assembly, heterooctamer of four alpha and four beta subunits. The cofactor is pyruvate. In terms of processing, is synthesized initially as an inactive proenzyme, which is activated by self-cleavage at a specific serine bond to produce a beta-subunit with a hydroxyl group at its C-terminus and an alpha-subunit with a pyruvoyl group at its N-terminus.

It is found in the cytoplasm. The catalysed reaction is L-aspartate + H(+) = beta-alanine + CO2. Its pathway is cofactor biosynthesis; (R)-pantothenate biosynthesis; beta-alanine from L-aspartate: step 1/1. Catalyzes the pyruvoyl-dependent decarboxylation of aspartate to produce beta-alanine. This chain is Aspartate 1-decarboxylase, found in Helicobacter acinonychis (strain Sheeba).